The primary structure comprises 175 residues: ATP synthase subunit b (175 aa).

Residues 22-42 (LNLLETNIINIAIVFGLLIFL) traverse the membrane as a helical segment.

It belongs to the ATPase B chain family. F-type ATPases have 2 components, F(1) - the catalytic core - and F(0) - the membrane proton channel. F(1) has five subunits: alpha(3), beta(3), gamma(1), delta(1), epsilon(1). F(0) has four main subunits: a(1), b(1), b'(1) and c(10-14). The alpha and beta chains form an alternating ring which encloses part of the gamma chain. F(1) is attached to F(0) by a central stalk formed by the gamma and epsilon chains, while a peripheral stalk is formed by the delta, b and b' chains.

It localises to the cell inner membrane. In terms of biological role, f(1)F(0) ATP synthase produces ATP from ADP in the presence of a proton or sodium gradient. F-type ATPases consist of two structural domains, F(1) containing the extramembraneous catalytic core and F(0) containing the membrane proton channel, linked together by a central stalk and a peripheral stalk. During catalysis, ATP synthesis in the catalytic domain of F(1) is coupled via a rotary mechanism of the central stalk subunits to proton translocation. Functionally, component of the F(0) channel, it forms part of the peripheral stalk, linking F(1) to F(0). In Gloeobacter violaceus (strain ATCC 29082 / PCC 7421), this protein is ATP synthase subunit b.